The following is a 350-amino-acid chain: Phenylalanine--tRNA ligase alpha subunit (350 aa).

Glutamate 262 provides a ligand contact to Mg(2+).

It belongs to the class-II aminoacyl-tRNA synthetase family. Phe-tRNA synthetase alpha subunit type 1 subfamily. Tetramer of two alpha and two beta subunits. It depends on Mg(2+) as a cofactor.

The protein resides in the cytoplasm. The enzyme catalyses tRNA(Phe) + L-phenylalanine + ATP = L-phenylalanyl-tRNA(Phe) + AMP + diphosphate + H(+). The sequence is that of Phenylalanine--tRNA ligase alpha subunit from Thermus thermophilus (strain ATCC BAA-163 / DSM 7039 / HB27).